Here is an 82-residue protein sequence, read N- to C-terminus: RNA-binding protein Hfq (82 aa).

The region spanning aspartate 9–valine 68 is the Sm domain.

This sequence belongs to the Hfq family. Homohexamer.

Its function is as follows. RNA chaperone that binds small regulatory RNA (sRNAs) and mRNAs to facilitate mRNA translational regulation in response to envelope stress, environmental stress and changes in metabolite concentrations. Also binds with high specificity to tRNAs. This chain is RNA-binding protein Hfq, found in Pseudomonas aeruginosa (strain LESB58).